The sequence spans 324 residues: 4-hydroxy-3-methylbut-2-enyl diphosphate reductase (324 aa).

Position 28 (Cys-28) interacts with [4Fe-4S] cluster. (2E)-4-hydroxy-3-methylbut-2-enyl diphosphate contacts are provided by His-57 and His-90. His-57 and His-90 together coordinate dimethylallyl diphosphate. His-57 and His-90 together coordinate isopentenyl diphosphate. Residue Cys-112 coordinates [4Fe-4S] cluster. Position 140 (His-140) interacts with (2E)-4-hydroxy-3-methylbut-2-enyl diphosphate. His-140 provides a ligand contact to dimethylallyl diphosphate. An isopentenyl diphosphate-binding site is contributed by His-140. Glu-142 (proton donor) is an active-site residue. Position 180 (Thr-180) interacts with (2E)-4-hydroxy-3-methylbut-2-enyl diphosphate. [4Fe-4S] cluster is bound at residue Cys-210. (2E)-4-hydroxy-3-methylbut-2-enyl diphosphate is bound by residues Ser-238, Ser-239, Asn-240, and Ser-282. Residues Ser-238, Ser-239, Asn-240, and Ser-282 each contribute to the dimethylallyl diphosphate site. Isopentenyl diphosphate-binding residues include Ser-238, Ser-239, Asn-240, and Ser-282.

The protein belongs to the IspH family. [4Fe-4S] cluster serves as cofactor.

It carries out the reaction isopentenyl diphosphate + 2 oxidized [2Fe-2S]-[ferredoxin] + H2O = (2E)-4-hydroxy-3-methylbut-2-enyl diphosphate + 2 reduced [2Fe-2S]-[ferredoxin] + 2 H(+). The catalysed reaction is dimethylallyl diphosphate + 2 oxidized [2Fe-2S]-[ferredoxin] + H2O = (2E)-4-hydroxy-3-methylbut-2-enyl diphosphate + 2 reduced [2Fe-2S]-[ferredoxin] + 2 H(+). Its pathway is isoprenoid biosynthesis; dimethylallyl diphosphate biosynthesis; dimethylallyl diphosphate from (2E)-4-hydroxy-3-methylbutenyl diphosphate: step 1/1. It participates in isoprenoid biosynthesis; isopentenyl diphosphate biosynthesis via DXP pathway; isopentenyl diphosphate from 1-deoxy-D-xylulose 5-phosphate: step 6/6. In terms of biological role, catalyzes the conversion of 1-hydroxy-2-methyl-2-(E)-butenyl 4-diphosphate (HMBPP) into a mixture of isopentenyl diphosphate (IPP) and dimethylallyl diphosphate (DMAPP). Acts in the terminal step of the DOXP/MEP pathway for isoprenoid precursor biosynthesis. In Ralstonia nicotianae (strain ATCC BAA-1114 / GMI1000) (Ralstonia solanacearum), this protein is 4-hydroxy-3-methylbut-2-enyl diphosphate reductase.